A 319-amino-acid polypeptide reads, in one-letter code: Myoblast determination protein 1 (319 aa).

Met-1 is covalently cross-linked (Peptide (Met-Gly) (interchain with G-Cter in ubiquitin)). Lys-104 is subject to N6-methyllysine; by EHMT2. The 52-residue stretch at 109–160 (DRRKAATMRERRRLSKVNEAFETLKRCTSSNPNQRLPKVEILRNAIRYIEGL) folds into the bHLH domain. Disordered regions lie at residues 174 to 222 (AAAA…GARR) and 267 to 319 (PALL…YQVL). Residues 197–207 (SDASSPRSNCS) show a composition bias toward polar residues. Low complexity predominate over residues 267 to 276 (PALLLADAPP).

As to quaternary structure, efficient DNA binding requires dimerization with another bHLH protein. Seems to form active heterodimers with ITF-2. Interacts with SUV39H1. Interacts with DDX5. Interacts with CHD2. Interacts with TSC22D3. Interacts with SETD3. Interacts with P-TEFB complex; promotes the transcriptional activity of MYOD1 through its CDK9-mediated phosphorylation. Interacts with CSRP3. Interacts with NUPR1. In terms of processing, phosphorylated by CDK9. This phosphorylation promotes its function in muscle differentiation. Post-translationally, acetylated by a complex containing EP300 and PCAF. The acetylation is essential to activate target genes. Conversely, its deacetylation by SIRT1 inhibits its function. Ubiquitinated on the N-terminus; which is required for proteasomal degradation. In terms of processing, methylation at Lys-104 by EHMT2/G9a inhibits myogenic activity.

It is found in the nucleus. Acts as a transcriptional activator that promotes transcription of muscle-specific target genes and plays a role in muscle differentiation. Together with MYF5 and MYOG, co-occupies muscle-specific gene promoter core region during myogenesis. Induces fibroblasts to differentiate into myoblasts. Interacts with and is inhibited by the twist protein. This interaction probably involves the basic domains of both proteins. This Ovis aries (Sheep) protein is Myoblast determination protein 1 (MYOD1).